The primary structure comprises 421 residues: MRKTNMWFLERLRGSGENGAARGVGSEAGDKASKGPLYSNVLTPDKIPDFFIPPKLPSGPAEGEGQAALGPSTSEQNLASAAPRQTPRSPRLPAKLAAESKSLLKAATRHVIQIESAEDWLSEEATDADPQAQGAMSLPSVPKAQTSYGFAMLAESPHTRRKESLFHSEHGALAQVGSPGAGRRRAAAKANGGDGGPREAGGALMSPGRYFSGGESDTGSSAESSPFGSPLLSRSVSLLKGFAQDSQAKVSQLRHSVGRHGSLSADDSTPDASPGSRRRLTRRAPPEPGPESGQARGEHTVHVGPRGSVRLLAEYEAGQARLRVHLLAAEGLYDRLCDARSINCCVGLCLVPGKLQKQRSTIVKNSRRPVFNEDFFFDGLGPASVRKLALRIKVVNKGSSLKRDTLLGEKELPLTSLLPFL.

4 disordered regions span residues Arg13–Ala97, Asp119–Ser140, His158–Gly228, and Val250–Val303. Over residues Glu215 to Gly228 the composition is skewed to polar residues. A phosphoserine mark is found at Ser262, Ser264, and Ser273. One can recognise a C2 domain in the interval Pro305–Leu421.

Belongs to the C2CD4 family.

The polypeptide is C2 calcium-dependent domain-containing protein 4C (C2CD4C) (Homo sapiens (Human)).